The following is a 270-amino-acid chain: Oxidized low-density lipoprotein receptor 1 (270 aa).

Positions 1-14 are enriched in basic and acidic residues; that stretch reads MTVDDPKGMKDQLD. Residues 1–22 are disordered; that stretch reads MTVDDPKGMKDQLDQKPNGKTA. Residues 1–33 lie on the Cytoplasmic side of the membrane; sequence MTVDDPKGMKDQLDQKPNGKTAKGFVSSWRWYP. The chain crosses the membrane as a helical; Signal-anchor for type II membrane protein span at residues 34-56; sequence AAVTLGVLCLGLLVTVILLILQL. The S-palmitoyl cysteine moiety is linked to residue Cys-42. A neck region spans residues 57-146; that stretch reads SQVSDLIKKQ…SGPCPQDWLW (90 aa). Over 57–270 the chain is Extracellular; sequence SQVSDLIKKQ…QKKANLLRAQ (214 aa). N-linked (GlcNAc...) asparagine glycosylation is found at Asn-69 and Asn-135. Residues 85-135 are a coiled coil; it reads RRSEKSAQESQKELKEMIETLAHKLDEKSKKLMELHRQNLNLQEVLKEAAN. 3 disulfide bridges follow: Cys-140-Cys-151, Cys-168-Cys-260, and Cys-239-Cys-252. A C-type lectin domain is found at 147 to 261; that stretch reads HEENCYQFSS…CILTAFSICQ (115 aa).

Homodimer; disulfide-linked. May form a hexamer composed of 3 homodimers. Interacts with HSP70. In terms of processing, N-glycosylated. Highly expressed in endothelial cells, aortic intima and lung. Expressed at low level in other tissues.

Its subcellular location is the cell membrane. The protein localises to the membrane raft. It localises to the secreted. Its function is as follows. Receptor that mediates the recognition, internalization and degradation of oxidatively modified low density lipoprotein (oxLDL) by vascular endothelial cells. OxLDL is a marker of atherosclerosis that induces vascular endothelial cell activation and dysfunction, resulting in pro-inflammatory responses, pro-oxidative conditions and apoptosis. Its association with oxLDL induces the activation of NF-kappa-B through an increased production of intracellular reactive oxygen and a variety of pro-atherogenic cellular responses including a reduction of nitric oxide (NO) release, monocyte adhesion and apoptosis. In addition to binding oxLDL, it acts as a receptor for the HSP70 protein involved in antigen cross-presentation to naive T-cells in dendritic cells, thereby participating in cell-mediated antigen cross-presentation. Also involved in inflammatory process, by acting as a leukocyte-adhesion molecule at the vascular interface in endotoxin-induced inflammation. Also acts as a receptor for advanced glycation end (AGE) products, activated platelets, monocytes, apoptotic cells and both Gram-negative and Gram-positive bacteria. In Bos taurus (Bovine), this protein is Oxidized low-density lipoprotein receptor 1 (OLR1).